The chain runs to 1012 residues: Structural polyprotein (1012 aa).

Position 30 (Asp-30) interacts with a divalent metal cation. The Peptidase S50 domain maps to 514–755 (ADKGYEVVAN…AGRQFHLALA (242 aa)). Ser-653 (nucleophile) is an active-site residue. The active site involves Lys-692. Residues 972–1012 (MKHRNPRRAPPKPKPKPNAPSQRPPGRLGRWIRTVSDEDLE) are disordered. Residues 975–986 (RNPRRAPPKPKP) are compositionally biased toward basic residues. The tract at residues 1003–1012 (IRTVSDEDLE) is interaction with VP1 protein.

In terms of assembly, homotrimer. A central divalent metal stabilizes the VP2 trimer. Interacts with host ITGA4/ITGB1. As to quaternary structure, homodimer. Interacts (via C-terminus) with VP1 in the cytoplasm. Interacts with VP2. Specific enzymatic cleavages yield mature proteins. The capsid assembly seems to be regulated by polyprotein processing. The protease VP4 cleaves itself off the polyprotein, thus releasing pre-VP2 and VP3 within the infected cell. During capsid assembly, the C-terminus of pre-VP2 is further processed by VP4, giving rise to VP2, the external capsid protein and three small peptides that all stay closely associated with the capsid.

The protein resides in the virion. It is found in the host cytoplasm. Functionally, capsid protein VP2 self assembles to form an icosahedral capsid with a T=13 symmetry, about 70 nm in diameter, and consisting of 260 VP2 trimers. The capsid encapsulates the genomic dsRNA. VP2 is also involved in attachment and entry into the host cell by interacting with host ITGA4/ITGB1. Its function is as follows. The precursor of VP2 plays an important role in capsid assembly. First, pre-VP2 and VP2 oligomers assemble to form a procapsid. Then, the pre-VP2 intermediates may be processed into VP2 proteins by proteolytic cleavage mediated by VP4 to obtain the mature virion. The final capsid is composed of pentamers and hexamers but VP2 has a natural tendency to assemble into all-pentameric structures. Therefore pre-VP2 may be required to allow formation of the hexameric structures. Protease VP4 is a serine protease that cleaves the polyprotein into its final products. Pre-VP2 is first partially cleaved, and may be completely processed by VP4 upon capsid maturation. In terms of biological role, capsid protein VP3 plays a key role in virion assembly by providing a scaffold for the capsid made of VP2. May self-assemble to form a T=4-like icosahedral inner-capsid composed of at least 180 trimers. Plays a role in genomic RNA packaging by recruiting VP1 into the capsid and interacting with the dsRNA genome segments to form a ribonucleoprotein complex. Additionally, the interaction of the VP3 C-terminal tail with VP1 removes the inherent structural blockade of the polymerase active site. Thus, VP3 can also function as a transcriptional activator. Functionally, structural peptide 1 is a small peptide derived from pre-VP2 C-terminus. It destabilizes and perforates cell membranes, suggesting a role during entry. Its function is as follows. Structural peptide 2 is a small peptide derived from pVP2 C-terminus. It is not essential for the virus viability, but viral growth is affected when missing. Structural peptide 3 is a small peptide derived from pVP2 C-terminus. It is not essential for the virus viability, but viral growth is affected when missing. In terms of biological role, structural peptide 4 is a small peptide derived from pVP2 C-terminus. It is essential for the virus viability. This Gallus gallus (Chicken) protein is Structural polyprotein.